We begin with the raw amino-acid sequence, 225 residues long: ATP-dependent dethiobiotin synthetase BioD (225 aa).

Position 12–17 (12–17 (EVGKTY)) interacts with ATP. Residue T16 participates in Mg(2+) binding. The active site involves K37. S41 is a substrate binding site. Residues D52, 114-117 (EGAG), and 174-175 (NC) each bind ATP. Mg(2+) is bound by residues D52 and E114.

This sequence belongs to the dethiobiotin synthetase family. In terms of assembly, homodimer. Mg(2+) is required as a cofactor.

The protein localises to the cytoplasm. It catalyses the reaction (7R,8S)-7,8-diammoniononanoate + CO2 + ATP = (4R,5S)-dethiobiotin + ADP + phosphate + 3 H(+). Its pathway is cofactor biosynthesis; biotin biosynthesis; biotin from 7,8-diaminononanoate: step 1/2. Functionally, catalyzes a mechanistically unusual reaction, the ATP-dependent insertion of CO2 between the N7 and N8 nitrogen atoms of 7,8-diaminopelargonic acid (DAPA, also called 7,8-diammoniononanoate) to form a ureido ring. In Francisella tularensis subsp. novicida (strain U112), this protein is ATP-dependent dethiobiotin synthetase BioD.